A 290-amino-acid polypeptide reads, in one-letter code: Tubulin beta-4B chain (290 aa).

The MREI motif signature appears at 1 to 4; it reads MREI. A GTP-binding site is contributed by Gln-11. Position 55 is a phosphothreonine (Thr-55). Lys-58 carries the post-translational modification N6-acetyllysine. The GTP site is built by Glu-69, Ser-138, Gly-142, Thr-143, Gly-144, and Asn-172. Glu-69 contacts Mg(2+).

It belongs to the tubulin family. As to quaternary structure, dimer of alpha and beta chains. A typical microtubule is a hollow water-filled tube with an outer diameter of 25 nm and an inner diameter of 15 nM. Alpha-beta heterodimers associate head-to-tail to form protofilaments running lengthwise along the microtubule wall with the beta-tubulin subunit facing the microtubule plus end conferring a structural polarity. Microtubules usually have 13 protofilaments but different protofilament numbers can be found in some organisms and specialized cells. Component of sperm flagellar doublet microtubules. It depends on Mg(2+) as a cofactor. Some glutamate residues at the C-terminus are polyglycylated, resulting in polyglycine chains on the gamma-carboxyl group. Glycylation is mainly limited to tubulin incorporated into axonemes (cilia and flagella) whereas glutamylation is prevalent in neuronal cells, centrioles, axonemes, and the mitotic spindle. Both modifications can coexist on the same protein on adjacent residues, and lowering polyglycylation levels increases polyglutamylation, and reciprocally. Cilia and flagella glycylation is required for their stability and maintenance. Flagella glycylation controls sperm motility. In terms of processing, some glutamate residues at the C-terminus are polyglutamylated, resulting in polyglutamate chains on the gamma-carboxyl group. Polyglutamylation plays a key role in microtubule severing by spastin (SPAST). SPAST preferentially recognizes and acts on microtubules decorated with short polyglutamate tails: severing activity by SPAST increases as the number of glutamates per tubulin rises from one to eight, but decreases beyond this glutamylation threshold. Glutamylation is also involved in cilia motility.

The protein resides in the cytoplasm. The protein localises to the cytoskeleton. It localises to the flagellum axoneme. In terms of biological role, tubulin is the major constituent of microtubules, a cylinder consisting of laterally associated linear protofilaments composed of alpha- and beta-tubulin heterodimers. Microtubules grow by the addition of GTP-tubulin dimers to the microtubule end, where a stabilizing cap forms. Below the cap, tubulin dimers are in GDP-bound state, owing to GTPase activity of alpha-tubulin. The polypeptide is Tubulin beta-4B chain (TUBB4B) (Mesocricetus auratus (Golden hamster)).